Here is a 243-residue protein sequence, read N- to C-terminus: Small ribosomal subunit protein uS3 (243 aa).

Residue Ala-2 is modified to N-acetylalanine. Position 6 is a phosphoserine; by PKC/PRKCD (Ser-6). The KH type-2 domain occupies 21–92; it reads LNEFLTRELA…SVELYAEKVA (72 aa). Position 35 is a phosphoserine (Ser-35). Position 42 is a phosphothreonine; by MAPK (Thr-42). An N6-acetyllysine modification is found at Lys-62. Residues Arg-64, Arg-65, and Arg-67 each carry the asymmetric dimethylarginine; by PRMT1 modification. At Thr-70 the chain carries Phosphothreonine; by PKB. Residue Lys-90 forms a Glycyl lysine isopeptide (Lys-Gly) (interchain with G-Cter in ubiquitin) linkage. At Ser-104 the chain carries Phosphoserine. Lys-132 carries the N6-succinyllysine modification. Lys-202 is covalently cross-linked (Glycyl lysine isopeptide (Lys-Gly) (interchain with G-Cter in ubiquitin)). Ser-209 bears the Phosphoserine; by IKKB mark. A Glycyl lysine isopeptide (Lys-Gly) (interchain with G-Cter in SUMO2); alternate cross-link involves residue Lys-214. Lys-214 is covalently cross-linked (Glycyl lysine isopeptide (Lys-Gly) (interchain with G-Cter in ubiquitin); alternate). Positions 214–243 are disordered; the sequence is KDEILPTTPISEQKGGKPEPPAMPQPVPTA. Phosphothreonine is present on Thr-220. Phosphothreonine; by CDK1 and PKC/PRKCD is present on Thr-221. At Ser-224 the chain carries Phosphoserine. Residue Lys-230 forms a Glycyl lysine isopeptide (Lys-Gly) (interchain with G-Cter in SUMO2) linkage. The segment covering 231–243 has biased composition (pro residues); sequence PEPPAMPQPVPTA. A Phosphothreonine modification is found at Thr-242.

The protein belongs to the universal ribosomal protein uS3 family. As to quaternary structure, component of the 40S small ribosomal subunit. Identified in a IGF2BP1-dependent mRNP granule complex containing untranslated mRNAs. Interacts with HNRPD. Interacts with PRMT1; the interaction methylates RPS3. Interacts with SUMO1; the interaction sumoylates RPS3. Interacts with UBC9. Interacts with CDK1; the interaction phosphorylates RPS3. Interacts with PRKCD; the interaction phosphorylates RPS3. Interacts with PKB/AKT; the interaction phosphorylates RPS3. Interacts with E2F1; the interaction occurs in the absence of nerve growth factor and increases transcription of pro-apoptotic proteins BCL2L11/BIM and HRK/Dp5. Interacts with the base excision repair proteins APEX1 and OGG1; interaction with OGG1 increases OGG1 N-glycosylase activity. Interacts with UNG; the interaction increases the uracil excision activity of UNG1. Interacts with HSP90; the interaction prevents the ubiquitination and proteasome-dependent degradation of RPS3 and is suppressed by increased ROS levels. Interacts with TOM70; the interaction promotes translocation of RPS3 to the mitochondrion. Interacts (via N-terminus) with RELA (via N-terminus); the interaction enhances the DNA-binding activity of the NF-kappa-B p65-p50 complex. Interacts with NFKBIA; the interaction is direct and may bridge the interaction between RPS3 and RELA. Interacts with IKKB; the interaction phosphorylates RPS3 and enhances its translocation to the nucleus. Interacts (via KH domain) with MDM2 and TP53. Interacts with TRADD. Interacts with CRY1. Post-translationally, methylation by PRMT1 is required for import into the nucleolus and for ribosome assembly. Sumoylation by SUMO1 enhances protein stability through increased resistance to proteolysis. Sumoylation occurs at one or more of the three consensus sites, Lys-18, Lys-214 and Lys-230. In terms of processing, phosphorylation at Thr-221 by CDK1 occurs mainly in G2/M phase. Phosphorylation by PRKCD occurs on a non-ribosomal-associated form which results in translocation of RPS3 to the nucleus and enhances its endonuclease activity. Phosphorylated on Ser-209 by IKKB in response to activation of the NF-kappa-B p65-p50 complex which enhances the association of RPS3 with importin-alpha and mediates the nuclear translocation of RPS3. Phosphorylation by MAPK is required for translocation to the nucleus following exposure of cells to DNA damaging agents such as hydrogen peroxide. Phosphorylation by PKB/AKT mediates RPS3 nuclear translocation, enhances RPS3 endonuclease activity and suppresses RPS3-induced neuronal apoptosis. Post-translationally, ubiquitinated; ubiquitination is prevented by interaction with HSP90 which stabilizes the protein. Monoubiquitinated at Lys-214 by RNF10 and ZNF598 when a ribosome has stalled during translation of poly(A) sequences, leading to preclude synthesis of a long poly-lysine tail and initiate the ribosome quality control (RQC) pathway to degrade the potentially detrimental aberrant nascent polypeptide. Deubiquitinated at Lys-214 by USP10, preventing degradation by the proteasome and promoting 40S ribosome subunit recycling following ribosome dissociation. Ufmylated by UFL1.

The protein resides in the cytoplasm. The protein localises to the nucleus. It is found in the nucleolus. Its subcellular location is the mitochondrion inner membrane. It localises to the cytoskeleton. The protein resides in the spindle. The catalysed reaction is 2'-deoxyribonucleotide-(2'-deoxyribose 5'-phosphate)-2'-deoxyribonucleotide-DNA = a 3'-end 2'-deoxyribonucleotide-(2,3-dehydro-2,3-deoxyribose 5'-phosphate)-DNA + a 5'-end 5'-phospho-2'-deoxyribonucleoside-DNA + H(+). Component of the small ribosomal subunit. The ribosome is a large ribonucleoprotein complex responsible for the synthesis of proteins in the cell. Has endonuclease activity and plays a role in repair of damaged DNA. Cleaves phosphodiester bonds of DNAs containing altered bases with broad specificity and cleaves supercoiled DNA more efficiently than relaxed DNA. Displays high binding affinity for 7,8-dihydro-8-oxoguanine (8-oxoG), a common DNA lesion caused by reactive oxygen species (ROS). Has also been shown to bind with similar affinity to intact and damaged DNA. Stimulates the N-glycosylase activity of the base excision protein OGG1. Enhances the uracil excision activity of UNG1. Also stimulates the cleavage of the phosphodiester backbone by APEX1. When located in the mitochondrion, reduces cellular ROS levels and mitochondrial DNA damage. Has also been shown to negatively regulate DNA repair in cells exposed to hydrogen peroxide. Plays a role in regulating transcription as part of the NF-kappa-B p65-p50 complex where it binds to the RELA/p65 subunit, enhances binding of the complex to DNA and promotes transcription of target genes. Represses its own translation by binding to its cognate mRNA. Binds to and protects TP53/p53 from MDM2-mediated ubiquitination. Involved in spindle formation and chromosome movement during mitosis by regulating microtubule polymerization. Involved in induction of apoptosis through its role in activation of CASP8. Induces neuronal apoptosis by interacting with the E2F1 transcription factor and acting synergistically with it to up-regulate pro-apoptotic proteins BCL2L11/BIM and HRK/Dp5. Interacts with TRADD following exposure to UV radiation and induces apoptosis by caspase-dependent JNK activation. The sequence is that of Small ribosomal subunit protein uS3 (RPS3) from Bos taurus (Bovine).